A 464-amino-acid polypeptide reads, in one-letter code: UDP-N-acetylmuramate--L-alanine ligase (464 aa).

Residue 115–121 (GSHGKTT) participates in ATP binding.

It belongs to the MurCDEF family.

The protein resides in the cytoplasm. It carries out the reaction UDP-N-acetyl-alpha-D-muramate + L-alanine + ATP = UDP-N-acetyl-alpha-D-muramoyl-L-alanine + ADP + phosphate + H(+). It functions in the pathway cell wall biogenesis; peptidoglycan biosynthesis. In terms of biological role, cell wall formation. The polypeptide is UDP-N-acetylmuramate--L-alanine ligase (Pelagibacter ubique (strain HTCC1062)).